Consider the following 152-residue polypeptide: Deoxyuridine 5'-triphosphate nucleotidohydrolase (152 aa).

Residues 71–73 (RSG), Asn-84, 88–90 (LID), and Met-98 contribute to the substrate site.

This sequence belongs to the dUTPase family. The cofactor is Mg(2+).

It carries out the reaction dUTP + H2O = dUMP + diphosphate + H(+). It functions in the pathway pyrimidine metabolism; dUMP biosynthesis; dUMP from dCTP (dUTP route): step 2/2. Its function is as follows. This enzyme is involved in nucleotide metabolism: it produces dUMP, the immediate precursor of thymidine nucleotides and it decreases the intracellular concentration of dUTP so that uracil cannot be incorporated into DNA. In Shewanella amazonensis (strain ATCC BAA-1098 / SB2B), this protein is Deoxyuridine 5'-triphosphate nucleotidohydrolase.